The chain runs to 267 residues: Staphylococcal secretory antigen ssaA2 (267 aa).

An N-terminal signal peptide occupies residues Met1 to Ala27. Repeat copies occupy residues Tyr83 to Asn85, Tyr86 to Asn88, Tyr89 to Asn91, Tyr95 to Asn97, Tyr101 to Asn103, Tyr104 to Asn106, and Tyr113 to Asn115. A 7 X 3 AA repeats of Y-[NS]-N region spans residues Tyr83–Asn115. One can recognise a Peptidase C51 domain in the interval Met146 to His267.

It localises to the secreted. Its function is as follows. Not known; immunogenic protein. This Staphylococcus aureus (strain NCTC 8325 / PS 47) protein is Staphylococcal secretory antigen ssaA2 (ssaA2).